The sequence spans 172 residues: Small acidic protein (172 aa).

A disordered region spans residues 1 to 160; it reads MSSARESQAR…VPETKKEAKS (160 aa). Positions 46–76 are enriched in basic and acidic residues; it reads GKKEHTGRLVIGDHRSTSHFRTGEEDKKMNE. The segment covering 80–92 has biased composition (polar residues); sequence SQYQQSMDSTMSG. 2 stretches are compositionally biased toward basic and acidic residues: residues 112–122 and 144–160; these read AAGHSSDHESS and ETHD…EAKS.

The protein belongs to the SMAP family. In terms of tissue distribution, expressed in brain, heart, eye, liver, kidney and skeletal muscle.

In Gallus gallus (Chicken), this protein is Small acidic protein (SMAP).